The following is a 644-amino-acid chain: 3D-(3,5/4)-trihydroxycyclohexane-1,2-dione hydrolase 1 (644 aa).

Position 65 (Glu-65) interacts with thiamine diphosphate. The segment at Ser-442–Gly-522 is thiamine pyrophosphate binding. Mg(2+) contacts are provided by Asp-493 and Asn-520.

Belongs to the TPP enzyme family. Requires Mg(2+) as cofactor. The cofactor is thiamine diphosphate.

The enzyme catalyses 3D-3,5/4-trihydroxycyclohexane-1,2-dione + H2O = 5-deoxy-D-glucuronate + H(+). It participates in polyol metabolism; myo-inositol degradation into acetyl-CoA; acetyl-CoA from myo-inositol: step 3/7. In terms of biological role, involved in the cleavage of the C1-C2 bond of 3D-(3,5/4)-trihydroxycyclohexane-1,2-dione (THcHDO) to yield 5-deoxy-glucuronate (5DG). This chain is 3D-(3,5/4)-trihydroxycyclohexane-1,2-dione hydrolase 1, found in Bacillus cereus (strain ZK / E33L).